We begin with the raw amino-acid sequence, 533 residues long: Probable anion transporter 4, chloroplastic (533 aa).

12 helical membrane-spanning segments follow: residues 117 to 137 (MLAL…VAIV), 152 to 172 (IVQS…GTLV), 179 to 199 (VVMA…PWAA), 203 to 223 (LWAL…ALPC), 243 to 263 (IAMA…PILM), 267 to 287 (GIYG…LVWL), 342 to 362 (VIVA…WMPI), 376 to 396 (AWFS…AGFW), 417 to 437 (IGFI…QPLV), 438 to 458 (ASAW…GFLI), 474 to 494 (MCLT…GFFV), and 502 to 522 (GFIL…NIYA).

This sequence belongs to the major facilitator superfamily. Sodium/anion cotransporter (TC 2.A.1.14) family. Expressed in leaf veins and root tips.

The protein localises to the plastid. The protein resides in the chloroplast membrane. In terms of biological role, inorganic phosphate and probable anion transporter. The chain is Probable anion transporter 4, chloroplastic (ANTR4) from Arabidopsis thaliana (Mouse-ear cress).